The sequence spans 377 residues: Guanine nucleotide-binding protein subunit beta-1 (377 aa).

7 WD repeats span residues 63–93 (GHTG…IVWN), 105–135 (LPCA…SIFN), 154–185 (GHKG…VLWD), 202–233 (GHTA…RLWD), 246–276 (GHEG…RLFD), 293–323 (GDIP…YVWD), and 339–369 (SHEG…KIWA).

The protein belongs to the WD repeat G protein beta family. As to quaternary structure, g proteins are composed of 3 units, alpha, beta and gamma.

Functionally, guanine nucleotide-binding proteins (G proteins) are involved as a modulator or transducer in various transmembrane signaling systems. The beta and gamma chains are required for the GTPase activity, for replacement of GDP by GTP, and for G protein-effector interaction. The protein is Guanine nucleotide-binding protein subunit beta-1 of Nicotiana tabacum (Common tobacco).